A 352-amino-acid polypeptide reads, in one-letter code: F-box/kelch-repeat protein At1g57790 (352 aa).

An F-box domain is found at 10 to 56 (KNLWKDLPLELLSSVMTFLEIKDNVRASVVCKSWFEAAVSVRVIDKS). 2 Kelch repeats span residues 148–189 (VVFT…HNNV) and 190–234 (VFSN…WNEG).

The sequence is that of F-box/kelch-repeat protein At1g57790 from Arabidopsis thaliana (Mouse-ear cress).